The following is a 342-amino-acid chain: MAIDENKQKALAAALGQIEKQFGKGSIMRLGEDRSMNVETISTGSLSLDVALGAGGLPRGRIVEIYGPESYGKTTLTLQVIAAAQREGKICAFIDAEHALDPIYAQKLGVDIDNLLCSQPDTGEQALEICDALSRSGAVDVIVVDSVAALTPKAEIEGEIGDSHVGLAARMMSQAMRKLAGNLKNSNTLLIFINQIRMKIGVMFGNPETTTGGNALKFYASVRLDIRRIGSVKNGDEVVGSETRVKVVKNKIAAPFKQAEFQIMYGEGINTFGELIDLGVKHKLVEKAGAWYSYNGEKIGQGKANATTYLKEHPEMYNELNTKLREMLLNHAGEFTSARDFC.

This sequence belongs to the RecA family.

It is found in the cytoplasm. In terms of biological role, can catalyze the hydrolysis of ATP in the presence of single-stranded DNA, the ATP-dependent uptake of single-stranded DNA by duplex DNA, and the ATP-dependent hybridization of homologous single-stranded DNAs. It interacts with LexA causing its activation and leading to its autocatalytic cleavage. The sequence is that of Protein RecA from Pectobacterium carotovorum (Erwinia carotovora).